The chain runs to 522 residues: 3'3'-cGAMP-specific phosphodiesterase 2 (522 aa).

The Response regulatory domain maps to 36–160 (CVLLVDDDEQ…QKLRTLLYSM (125 aa)). Residue D91 is modified to 4-aspartylphosphate. The region spanning 325–522 (LRETSKELVY…FIAIRASLPD (198 aa)) is the HD-GYP domain. The a divalent metal cation site is built by H382 and D383. Catalysis depends on K386, which acts as the Proton donor. Residues H411, H437, H438, and D466 each coordinate a divalent metal cation.

In terms of assembly, homodimer. It depends on Mn(2+) as a cofactor.

The catalysed reaction is 3',3'-cGAMP + H2O = 5'-pApG-3' + H(+). Its function is as follows. Phosphodiesterase (PDE) that catalyzes the hydrolysis of 3'3'-cyclic GMP-AMP (3'3'-cGAMP), leading to linear 5'-pApG. Counteracts the function of the 3'3'-cGAMP synthase DncV, and is involved in the modulation of intracellular 3'3'-cGAMP levels. Enhances bacterial chemotaxis and inhibits intestinal colonization in vivo. Thus exerts a crucial role in regulating bacterial infectivity through catalyzing 3'3'-cGAMP degradation. Is specific for 3'3'-cGAMP since it cannot degrade other cGAMP linkage isomers (3'2'-, 2'3'-, and 2'2'-cGAMPs). Is also able to hydrolyze c-di-GMP but not c-di-AMP. The chain is 3'3'-cGAMP-specific phosphodiesterase 2 from Vibrio cholerae serotype O1 (strain ATCC 39315 / El Tor Inaba N16961).